A 262-amino-acid chain; its full sequence is Phosphonates import ATP-binding protein PhnC (262 aa).

The ABC transporter domain maps to 5–253; sequence ICVEQLSKTF…RFDHLYRSIN (249 aa). 37-44 contributes to the ATP binding site; that stretch reads GPSGSGKS.

Belongs to the ABC transporter superfamily. Phosphonates importer (TC 3.A.1.9.1) family. In terms of assembly, the complex is composed of two ATP-binding proteins (PhnC), two transmembrane proteins (PhnE) and a solute-binding protein (PhnD).

The protein resides in the cell inner membrane. The catalysed reaction is phosphonate(out) + ATP + H2O = phosphonate(in) + ADP + phosphate + H(+). Its function is as follows. Part of the ABC transporter complex PhnCDE involved in phosphonates import. Responsible for energy coupling to the transport system. This chain is Phosphonates import ATP-binding protein PhnC, found in Escherichia coli O157:H7.